The following is a 101-amino-acid chain: Small ribosomal subunit protein uS14 (101 aa).

Positions 46 to 72 are disordered; it reads FELNRQPRDASPVRVRNRDSRDGRPRG. Residues 61-70 are compositionally biased toward basic and acidic residues; sequence RNRDSRDGRP.

The protein belongs to the universal ribosomal protein uS14 family. As to quaternary structure, part of the 30S ribosomal subunit. Contacts proteins S3 and S10.

In terms of biological role, binds 16S rRNA, required for the assembly of 30S particles and may also be responsible for determining the conformation of the 16S rRNA at the A site. This Corynebacterium diphtheriae (strain ATCC 700971 / NCTC 13129 / Biotype gravis) protein is Small ribosomal subunit protein uS14.